The chain runs to 354 residues: Phosphoribosylformylglycinamidine cyclo-ligase (354 aa).

It belongs to the AIR synthase family.

It localises to the cytoplasm. It carries out the reaction 2-formamido-N(1)-(5-O-phospho-beta-D-ribosyl)acetamidine + ATP = 5-amino-1-(5-phospho-beta-D-ribosyl)imidazole + ADP + phosphate + H(+). It functions in the pathway purine metabolism; IMP biosynthesis via de novo pathway; 5-amino-1-(5-phospho-D-ribosyl)imidazole from N(2)-formyl-N(1)-(5-phospho-D-ribosyl)glycinamide: step 2/2. This chain is Phosphoribosylformylglycinamidine cyclo-ligase, found in Synechococcus sp. (strain JA-2-3B'a(2-13)) (Cyanobacteria bacterium Yellowstone B-Prime).